Consider the following 297-residue polypeptide: Homoserine kinase (297 aa).

82–92 (PVSRGLGSSAA) lines the ATP pocket.

The protein belongs to the GHMP kinase family. Homoserine kinase subfamily.

Its subcellular location is the cytoplasm. The catalysed reaction is L-homoserine + ATP = O-phospho-L-homoserine + ADP + H(+). It functions in the pathway amino-acid biosynthesis; L-threonine biosynthesis; L-threonine from L-aspartate: step 4/5. Catalyzes the ATP-dependent phosphorylation of L-homoserine to L-homoserine phosphate. This chain is Homoserine kinase, found in Clostridium botulinum (strain Loch Maree / Type A3).